The following is a 119-amino-acid chain: Large ribosomal subunit protein bL20 (119 aa).

Belongs to the bacterial ribosomal protein bL20 family.

Its function is as follows. Binds directly to 23S ribosomal RNA and is necessary for the in vitro assembly process of the 50S ribosomal subunit. It is not involved in the protein synthesizing functions of that subunit. The chain is Large ribosomal subunit protein bL20 from Delftia acidovorans (strain DSM 14801 / SPH-1).